The primary structure comprises 929 residues: MDKNYNPQAIEQYWYQIWEQKGYFTPQGKDSSYCIMIPPPNVTGHLHMGHAFQSTIMDALIRYHRMRGDDTLWQVGADHAGIATQMVVENQLNAEGKTRHDLGREAFIQRVWEWKEHSGGTITRQLRRMGTSVDWSRERFTMDEGLSQAVGEVFVRLYDEGLLYRGKRLVNWDSVLHTAISDLEVISEEENSHLWHMRYPLSDGSGHLVVATTRPETMLGDTAVAVHPEDPRYQHLIGKTVALPLTDRTIPVIADDYVEPEFGSGCVKITPAHDFNDYEVGQRHGLPFINIFTVDASLNENVPERYRNLDRFEARKLVVADLEAAGLLEKIEDHKLMVPRGDRSRTVIEPYLTDQWFVKTAPLAEPAIQAVENGQIRFIPENWNKIYFEWMRNIQDWCISRQIWWGHRIPAWYDPEGKIYVAPTETQARQKYNLPPDLPLEQDPDVLDTWFSSALWPFSTLGWPEDTSLLRAFYPTSVLVTGFDIIFFWVARMIMMGLKFTGEVPFHEVYIHGLVRDAEGQKMSKSKGNVLDPLDLIDGIDLETLVTKRTGGLMQPAMAKRIEKATRKEFPQGIPSFGCDALRFTFAILATRGRDIRFDLGRIEGYRNFCNKLWNAARYVLINVSSEISVERQGKPEQAEENLMLGAPERWIISRFHSTTQEVIEGIENYRFDRVAQAIYNFTWNEYCDWYLELSKPVLNNPASPEAAKRRTRHTLVHVLEALLRLAHPIIPFITEEIWQQVGPLAGRQGKTIMLQPYPQPEIDKIDEDAVAEIEWVIAFVTGVRSIRSQMNIAPGKPIPLLLQAGKAHDRTRLESNQKFLAALAKLDSIQWLKDETPPPAATALVDELKLLIPLAGLIDKEAELKRLDREMQRMRKDLARVQGKLANSNYVERAPAEIVAKERQRAQEVTAALSTLEQQHAEITDLNP.

Residues 40 to 50 (PNVTGHLHMGH) carry the 'HIGH' region motif. A 'KMSKS' region motif is present at residues 522 to 526 (KMSKS). Lys-525 lines the ATP pocket. A coiled-coil region spans residues 855 to 926 (LAGLIDKEAE…LEQQHAEITD (72 aa)).

It belongs to the class-I aminoacyl-tRNA synthetase family. ValS type 1 subfamily. In terms of assembly, monomer.

The protein localises to the cytoplasm. The enzyme catalyses tRNA(Val) + L-valine + ATP = L-valyl-tRNA(Val) + AMP + diphosphate. Catalyzes the attachment of valine to tRNA(Val). As ValRS can inadvertently accommodate and process structurally similar amino acids such as threonine, to avoid such errors, it has a 'posttransfer' editing activity that hydrolyzes mischarged Thr-tRNA(Val) in a tRNA-dependent manner. In Nitrosococcus oceani (strain ATCC 19707 / BCRC 17464 / JCM 30415 / NCIMB 11848 / C-107), this protein is Valine--tRNA ligase.